A 416-amino-acid polypeptide reads, in one-letter code: Keratin, type I cuticular Ha1 (416 aa).

Positions 1 to 56 are head; the sequence is MPYNFCLPSLSCRTSCSSRPCVPPSCHSCTLPGACNIPANVSNCNWFCEGSFNGSE. An IF rod domain is found at 56-367; that stretch reads EKETMQFLND…SLLESEDCNL (312 aa). Residues 57–91 are coil 1A; it reads KETMQFLNDRLASYLEKVRQLERDNAELENLIRER. Positions 92–102 are linker 1; it reads SQQQEPLLCPS. Residues 103-203 form a coil 1B region; sequence YQSYFKTIEE…HEQEVNTLRC (101 aa). A linker 12 region spans residues 204–219; it reads QLGDRLNVEVDAAPTV. The tract at residues 220–363 is coil 2; it reads DLNRVLNETR…NTYRSLLESE (144 aa). Residues 364–416 form a tail region; it reads DCNLPSNPCATTNACSKPIGPCLSNPCTSCVPPAPCTPCAPRPRCGPCNSFVR.

It belongs to the intermediate filament family. In terms of tissue distribution, present in scalp but not in hairless skin. Abundantly expressed in the differentiating cortex of growing (anagen) hair. Expression is restricted to the keratinocytes of the hair cortex and is absent from inner root sheath and medulla.

This chain is Keratin, type I cuticular Ha1 (KRT31), found in Homo sapiens (Human).